We begin with the raw amino-acid sequence, 95 residues long: Large ribosomal subunit protein bL27 (95 aa).

Positions 1–6 are excised as a propeptide; that stretch reads MILQLF.

Belongs to the bacterial ribosomal protein bL27 family. The N-terminus is cleaved by ribosomal processing cysteine protease Prp.

The polypeptide is Large ribosomal subunit protein bL27 (Caldanaerobacter subterraneus subsp. tengcongensis (strain DSM 15242 / JCM 11007 / NBRC 100824 / MB4) (Thermoanaerobacter tengcongensis)).